The chain runs to 428 residues: Peptidase B (428 aa).

2 residues coordinate Mn(2+): K195 and D200. K207 is a catalytic residue. The Mn(2+) site is built by D218, D277, and E279. R281 is an active-site residue.

The protein belongs to the peptidase M17 family. As to quaternary structure, homohexamer. Requires Mn(2+) as cofactor.

It localises to the cytoplasm. The enzyme catalyses Release of an N-terminal amino acid, Xaa, from a peptide or arylamide. Xaa is preferably Glu or Asp but may be other amino acids, including Leu, Met, His, Cys and Gln.. Probably plays an important role in intracellular peptide degradation. The chain is Peptidase B from Klebsiella pneumoniae (strain 342).